A 603-amino-acid chain; its full sequence is Putative lipase atg15 (603 aa).

Over 1 to 20 (MDQPHRRTRKWHLMDLSVST) the chain is Cytoplasmic. The helical; Signal-anchor for type II membrane protein transmembrane segment at 21–41 (LLMSLALVLPSCVSAYQPVYF) threads the bilayer. At 42 to 603 (RSQEATPFIP…ITPAPILIDL (562 aa)) the chain is on the lumenal side. Residues asparagine 166, asparagine 201, asparagine 223, asparagine 281, and asparagine 305 are each glycosylated (N-linked (GlcNAc...) asparagine). Serine 321 (charge relay system) is an active-site residue. Residue asparagine 467 is glycosylated (N-linked (GlcNAc...) asparagine).

Belongs to the AB hydrolase superfamily. Lipase family. Binds to both phosphatidylinositol (PI) and phosphatidylinositol 3,5-bisphosphate (PIP2).

The protein localises to the endosome. Its subcellular location is the multivesicular body membrane. It is found in the prevacuolar compartment membrane. The catalysed reaction is a triacylglycerol + H2O = a diacylglycerol + a fatty acid + H(+). Lipase which is essential for lysis of subvacuolar cytoplasm to vacuole targeted bodies and intravacuolar autophagic bodies. Involved in the lysis of intravacuolar multivesicular body (MVB) vesicles. The intravacuolar membrane disintegration by atg15 is critical to life span extension. This is Putative lipase atg15 (atg15) from Emericella nidulans (strain FGSC A4 / ATCC 38163 / CBS 112.46 / NRRL 194 / M139) (Aspergillus nidulans).